Consider the following 436-residue polypeptide: 3-ketoacyl-CoA thiolase (436 aa).

The Acyl-thioester intermediate role is filled by C99. Residues H392 and C422 each act as proton acceptor in the active site.

Belongs to the thiolase-like superfamily. Thiolase family. Heterotetramer of two alpha chains (FadJ) and two beta chains (FadI).

The protein localises to the cytoplasm. The catalysed reaction is an acyl-CoA + acetyl-CoA = a 3-oxoacyl-CoA + CoA. Its pathway is lipid metabolism; fatty acid beta-oxidation. Its function is as follows. Catalyzes the final step of fatty acid oxidation in which acetyl-CoA is released and the CoA ester of a fatty acid two carbons shorter is formed. In Shewanella sp. (strain ANA-3), this protein is 3-ketoacyl-CoA thiolase.